We begin with the raw amino-acid sequence, 208 residues long: Large ribosomal subunit protein bL25 (208 aa).

Belongs to the bacterial ribosomal protein bL25 family. CTC subfamily. Part of the 50S ribosomal subunit; part of the 5S rRNA/L5/L18/L25 subcomplex. Contacts the 5S rRNA. Binds to the 5S rRNA independently of L5 and L18.

Its function is as follows. This is one of the proteins that binds to the 5S RNA in the ribosome where it forms part of the central protuberance. This is Large ribosomal subunit protein bL25 from Leptothrix cholodnii (strain ATCC 51168 / LMG 8142 / SP-6) (Leptothrix discophora (strain SP-6)).